Consider the following 347-residue polypeptide: Lipoyl synthase (347 aa).

Residues Cys77, Cys82, Cys88, Cys103, Cys107, Cys110, and Ser317 each coordinate [4Fe-4S] cluster. The Radical SAM core domain occupies 89-306 (FADGTATFMI…MDYGKKIGFF (218 aa)).

Belongs to the radical SAM superfamily. Lipoyl synthase family. The cofactor is [4Fe-4S] cluster.

It is found in the cytoplasm. It carries out the reaction [[Fe-S] cluster scaffold protein carrying a second [4Fe-4S](2+) cluster] + N(6)-octanoyl-L-lysyl-[protein] + 2 oxidized [2Fe-2S]-[ferredoxin] + 2 S-adenosyl-L-methionine + 4 H(+) = [[Fe-S] cluster scaffold protein] + N(6)-[(R)-dihydrolipoyl]-L-lysyl-[protein] + 4 Fe(3+) + 2 hydrogen sulfide + 2 5'-deoxyadenosine + 2 L-methionine + 2 reduced [2Fe-2S]-[ferredoxin]. It functions in the pathway protein modification; protein lipoylation via endogenous pathway; protein N(6)-(lipoyl)lysine from octanoyl-[acyl-carrier-protein]: step 2/2. Its function is as follows. Catalyzes the radical-mediated insertion of two sulfur atoms into the C-6 and C-8 positions of the octanoyl moiety bound to the lipoyl domains of lipoate-dependent enzymes, thereby converting the octanoylated domains into lipoylated derivatives. This Psychrobacter cryohalolentis (strain ATCC BAA-1226 / DSM 17306 / VKM B-2378 / K5) protein is Lipoyl synthase.